The primary structure comprises 215 residues: Deoxyribose-phosphate aldolase (215 aa).

Asp90 functions as the Proton donor/acceptor in the catalytic mechanism. Residue Lys152 is the Schiff-base intermediate with acetaldehyde of the active site. Lys181 functions as the Proton donor/acceptor in the catalytic mechanism.

The protein belongs to the DeoC/FbaB aldolase family. DeoC type 1 subfamily.

Its subcellular location is the cytoplasm. The enzyme catalyses 2-deoxy-D-ribose 5-phosphate = D-glyceraldehyde 3-phosphate + acetaldehyde. Its pathway is carbohydrate degradation; 2-deoxy-D-ribose 1-phosphate degradation; D-glyceraldehyde 3-phosphate and acetaldehyde from 2-deoxy-alpha-D-ribose 1-phosphate: step 2/2. In terms of biological role, catalyzes a reversible aldol reaction between acetaldehyde and D-glyceraldehyde 3-phosphate to generate 2-deoxy-D-ribose 5-phosphate. In Ureaplasma urealyticum serovar 10 (strain ATCC 33699 / Western), this protein is Deoxyribose-phosphate aldolase.